A 202-amino-acid chain; its full sequence is MSTITFVTGNANKLKEVIAILASSETDSSSSSSSLSSSNKVGKFTITNQSVDLDEVQGTIEQVTIHKAQAAAKVIDGPVLVEDTCLGFNAFNDLPGPYIKWFVQSIGLTGLVKMLIGFEDKSAKAICTFGYCEGPDKEVKIFQGITEGKIVDSRGPTNFGWDSIFQPNGFEQTYAEMDKKVKNSISHRYKALDKVRDYLLSQ.

8–13 (TGNANK) lines the ITP pocket. Glu55 lines the Mg(2+) pocket. Residues Lys67, 83–84 (DT), Lys100, 159–162 (FGWD), Lys182, and 187–188 (HR) each bind ITP.

This sequence belongs to the HAM1 NTPase family. As to quaternary structure, homodimer. Mg(2+) serves as cofactor. Requires Mn(2+) as cofactor.

Its subcellular location is the cytoplasm. It is found in the nucleus. It carries out the reaction ITP + H2O = IMP + diphosphate + H(+). The catalysed reaction is dITP + H2O = dIMP + diphosphate + H(+). The enzyme catalyses XTP + H2O = XMP + diphosphate + H(+). Pyrophosphatase that hydrolyzes non-canonical purine nucleotides such as inosine triphosphate (ITP), deoxyinosine triphosphate (dITP) or xanthosine 5'-triphosphate (XTP) to their respective monophosphate derivatives. The enzyme does not distinguish between the deoxy- and ribose forms. Probably excludes non-canonical purines from RNA and DNA precursor pools, thus preventing their incorporation into RNA and DNA and avoiding chromosomal lesions. In Candida albicans (strain SC5314 / ATCC MYA-2876) (Yeast), this protein is Inosine triphosphate pyrophosphatase.